Here is a 116-residue protein sequence, read N- to C-terminus: Large ribosomal subunit protein uL22c (116 aa).

The protein belongs to the universal ribosomal protein uL22 family. Part of the 50S ribosomal subunit.

It is found in the plastid. It localises to the chloroplast. Functionally, this protein binds specifically to 23S rRNA. Its function is as follows. The globular domain of the protein is located near the polypeptide exit tunnel on the outside of the subunit, while an extended beta-hairpin is found that lines the wall of the exit tunnel in the center of the 70S ribosome. This Porphyra purpurea (Red seaweed) protein is Large ribosomal subunit protein uL22c (rpl22).